The chain runs to 176 residues: Lipoprotein signal peptidase (176 aa).

The next 4 membrane-spanning stretches (helical) occupy residues 10–30 (LFQFYPHNLIWLGLSVLAIVL), 48–68 (VPVLPFLNWTLLHNYGAAFSF), 78–98 (YFFTSLAGLVSILFVFWLLRM), and 102–122 (MVVLPVAIALILGGALGNLID). Residues Asp-131 and Asp-149 contribute to the active site. A helical membrane pass occupies residues 141 to 161 (HFPAFNIADSAITLGTILLLI).

This sequence belongs to the peptidase A8 family.

It is found in the cell inner membrane. The enzyme catalyses Release of signal peptides from bacterial membrane prolipoproteins. Hydrolyzes -Xaa-Yaa-Zaa-|-(S,diacylglyceryl)Cys-, in which Xaa is hydrophobic (preferably Leu), and Yaa (Ala or Ser) and Zaa (Gly or Ala) have small, neutral side chains.. Its pathway is protein modification; lipoprotein biosynthesis (signal peptide cleavage). In terms of biological role, this protein specifically catalyzes the removal of signal peptides from prolipoproteins. This chain is Lipoprotein signal peptidase, found in Acinetobacter baumannii (strain SDF).